Here is a 43-residue protein sequence, read N- to C-terminus: AEVNPPEAFNQDVDTYLKIFRNGRYPLDKMAVICSQTGFKLDK.

It belongs to the protease inhibitor I13 (potato type I serine protease inhibitor) family. In terms of assembly, heterodimer of an A chain and a B chain, linked by a disulfide bond.

Inhibitor of chymotrypsin. This Theromyzon tessulatum (Duck leech) protein is Cytin chain A.